The following is a 270-amino-acid chain: tRNA pseudouridine synthase A (270 aa).

Asp-60 (nucleophile) is an active-site residue. The segment at 107–111 (FHARF) is RNA binding. Tyr-118 is a substrate binding site. The interaction with tRNA stretch occupies residues 168 to 172 (QCQSR).

Belongs to the tRNA pseudouridine synthase TruA family. As to quaternary structure, homodimer.

The catalysed reaction is uridine(38/39/40) in tRNA = pseudouridine(38/39/40) in tRNA. In terms of biological role, formation of pseudouridine at positions 38, 39 and 40 in the anticodon stem and loop of transfer RNAs. The chain is tRNA pseudouridine synthase A from Shigella sonnei (strain Ss046).